Reading from the N-terminus, the 847-residue chain is DNA mismatch repair protein MutS (847 aa).

Residue 602–609 (GPNMSGKS) participates in ATP binding. Positions 788-807 (EKREASLPASRTDSQKVSEQ) are disordered. A compositionally biased stretch (polar residues) spans 796–807 (ASRTDSQKVSEQ).

It belongs to the DNA mismatch repair MutS family.

Its function is as follows. This protein is involved in the repair of mismatches in DNA. It is possible that it carries out the mismatch recognition step. This protein has a weak ATPase activity. The polypeptide is DNA mismatch repair protein MutS (Streptococcus gordonii (strain Challis / ATCC 35105 / BCRC 15272 / CH1 / DL1 / V288)).